The sequence spans 153 residues: 6,7-dimethyl-8-ribityllumazine synthase (153 aa).

5-amino-6-(D-ribitylamino)uracil-binding positions include Phe21, Ala55 to Glu57, and Cys79 to Ile81. (2S)-2-hydroxy-3-oxobutyl phosphate is bound at residue Ala84–Thr85. His87 (proton donor) is an active-site residue. Phe112 lines the 5-amino-6-(D-ribitylamino)uracil pocket. (2S)-2-hydroxy-3-oxobutyl phosphate is bound at residue Arg126.

The protein belongs to the DMRL synthase family. As to quaternary structure, forms an icosahedral capsid composed of 60 subunits, arranged as a dodecamer of pentamers.

The enzyme catalyses (2S)-2-hydroxy-3-oxobutyl phosphate + 5-amino-6-(D-ribitylamino)uracil = 6,7-dimethyl-8-(1-D-ribityl)lumazine + phosphate + 2 H2O + H(+). Its pathway is cofactor biosynthesis; riboflavin biosynthesis; riboflavin from 2-hydroxy-3-oxobutyl phosphate and 5-amino-6-(D-ribitylamino)uracil: step 1/2. Its function is as follows. Catalyzes the formation of 6,7-dimethyl-8-ribityllumazine by condensation of 5-amino-6-(D-ribitylamino)uracil with 3,4-dihydroxy-2-butanone 4-phosphate. This is the penultimate step in the biosynthesis of riboflavin. The protein is 6,7-dimethyl-8-ribityllumazine synthase of Staphylococcus epidermidis (strain ATCC 35984 / DSM 28319 / BCRC 17069 / CCUG 31568 / BM 3577 / RP62A).